The following is a 162-amino-acid chain: CD-NTase-associated protein 7 (162 aa).

The disordered stretch occupies residues 138-162 (HSGLTQSGGREYSSNGYGMQRKDYN). Positions 139–154 (SGLTQSGGREYSSNGY) are enriched in polar residues.

It belongs to the HORMA family. HORMA1 subfamily. In terms of assembly, forms complexes with CdnC with 1:1 and 2:2 stoichimetry, and a 1:1:6 CdnC:Cap7:Cap6 complex.

Sensor protein of a CBASS antivirus system. CBASS (cyclic oligonucleotide-based antiphage signaling system) provides immunity against bacteriophage. The CD-NTase protein synthesizes cyclic nucleotides in response to infection; these serve as specific second messenger signals. The signals activate a diverse range of effectors, leading to bacterial cell death and thus abortive phage infection. A type III CBASS system. Expression of this CBASS system (Cap18-Cap6-Cap7-CdnC-CapW-Cap17) in a susceptible E.coli (strain MG1655) confers resistance to bacteriophage P1. The sensor protein for this CBASS system. Binds to a closure peptide, which allows it to activate CdnC for second messenger synthesis. The protein is CD-NTase-associated protein 7 of Escherichia coli (strain KTE188).